Consider the following 164-residue polypeptide: Putative F-box protein At1g59675 (164 aa).

The F-box domain maps to 9–56 (SQSDHVPLDLTIEILSRLPAKSVGRFRSVSKLWSANTTSQNFINSFAT).

The sequence is that of Putative F-box protein At1g59675 from Arabidopsis thaliana (Mouse-ear cress).